A 376-amino-acid chain; its full sequence is 4-hydroxy-3-methylbut-2-enyl diphosphate reductase (376 aa).

C19 lines the [4Fe-4S] cluster pocket. 2 residues coordinate (2E)-4-hydroxy-3-methylbut-2-enyl diphosphate: H48 and H99. Dimethylallyl diphosphate contacts are provided by H48 and H99. 2 residues coordinate isopentenyl diphosphate: H48 and H99. C121 serves as a coordination point for [4Fe-4S] cluster. Residue H149 participates in (2E)-4-hydroxy-3-methylbut-2-enyl diphosphate binding. Position 149 (H149) interacts with dimethylallyl diphosphate. H149 contacts isopentenyl diphosphate. E151 serves as the catalytic Proton donor. Position 208 (T208) interacts with (2E)-4-hydroxy-3-methylbut-2-enyl diphosphate. A [4Fe-4S] cluster-binding site is contributed by C236. Residues S264, N266, and S307 each coordinate (2E)-4-hydroxy-3-methylbut-2-enyl diphosphate. S264, N266, and S307 together coordinate dimethylallyl diphosphate. 3 residues coordinate isopentenyl diphosphate: S264, N266, and S307.

The protein belongs to the IspH family. It depends on [4Fe-4S] cluster as a cofactor.

The enzyme catalyses isopentenyl diphosphate + 2 oxidized [2Fe-2S]-[ferredoxin] + H2O = (2E)-4-hydroxy-3-methylbut-2-enyl diphosphate + 2 reduced [2Fe-2S]-[ferredoxin] + 2 H(+). It catalyses the reaction dimethylallyl diphosphate + 2 oxidized [2Fe-2S]-[ferredoxin] + H2O = (2E)-4-hydroxy-3-methylbut-2-enyl diphosphate + 2 reduced [2Fe-2S]-[ferredoxin] + 2 H(+). The protein operates within isoprenoid biosynthesis; dimethylallyl diphosphate biosynthesis; dimethylallyl diphosphate from (2E)-4-hydroxy-3-methylbutenyl diphosphate: step 1/1. Its pathway is isoprenoid biosynthesis; isopentenyl diphosphate biosynthesis via DXP pathway; isopentenyl diphosphate from 1-deoxy-D-xylulose 5-phosphate: step 6/6. In terms of biological role, catalyzes the conversion of 1-hydroxy-2-methyl-2-(E)-butenyl 4-diphosphate (HMBPP) into a mixture of isopentenyl diphosphate (IPP) and dimethylallyl diphosphate (DMAPP). Acts in the terminal step of the DOXP/MEP pathway for isoprenoid precursor biosynthesis. The polypeptide is 4-hydroxy-3-methylbut-2-enyl diphosphate reductase (Treponema pallidum (strain Nichols)).